The chain runs to 65 residues: uncharacterized protein (65 aa).

A run of 2 helical transmembrane segments spans residues 4 to 24 (TIWL…MLYP) and 45 to 65 (FGGG…KTIG).

It localises to the cell membrane. This is an uncharacterized protein from Escherichia coli O157:H7.